The sequence spans 2798 residues: Kinesin-like protein KIN-12F (2798 aa).

Positions 1–165 (MVRDLAAVRR…RPPMSSGQRG (165 aa)) are disordered. Composition is skewed to low complexity over residues 8-22 (VRRT…SSAS) and 31-58 (PVDA…QPPQ). In terms of domain architecture, Kinesin motor spans 210 to 547 (NVQVVIRVRP…LKFAQRARLI (338 aa)). ATP is bound at residue 291-298 (GQTGSGKT). Acidic residues predominate over residues 600–615 (DVDDGTESMNMDEEND). Residues 600–621 (DVDDGTESMNMDEENDNDAHDR) form a disordered region. 5 coiled-coil regions span residues 792–835 (ELKR…HSSN), 890–987 (LAEE…HRRQ), 1014–1108 (LKRM…VMKE), 1281–1322 (QRAM…LKNE), and 2130–2333 (ELVD…VRQQ). A disordered region spans residues 2338 to 2359 (PSSGQATSSLEGGMGDFTDSSR). Coiled coils occupy residues 2361–2427 (SREI…VKSD) and 2545–2758 (ESKE…LKLK). The interval 2772–2798 (RSESSSLSSGRSRSPSVCRSPSISSFR) is disordered. The span at 2774–2798 (ESSSLSSGRSRSPSVCRSPSISSFR) shows a compositional bias: low complexity.

The protein belongs to the TRAFAC class myosin-kinesin ATPase superfamily. Kinesin family. KIN-12 subfamily.

This chain is Kinesin-like protein KIN-12F, found in Oryza sativa subsp. japonica (Rice).